A 314-amino-acid chain; its full sequence is MVASLIKRAKATSLRSLFQKNEMNFQSIRFNIHQFSTQPALRSEGSELIFGGRSFDSLLSSIKETMEEKKKKSSSFEKRDKRRVQLKEKSPLRTPRNRTQIIDARSTRKDTENESLRKNNFKRRTQFAFTGRATKSNAGVMDVQSPSTMSTSKNNVRNAERPASKKPVFGSKKYFDVINDSNVENKEETKDRNLDRALSKFTQSREKNEQNLSSKASVLRNKKSILLKKRNQDETQLTTEEDFSANNDSTAKIETSIHDHRDISRITPFELPFVNPKLFASFTPMSVALPAGRLLLIKQLQEKSTQSSSMTGLK.

Basic and acidic residues predominate over residues glutamate 68 to proline 91. Disordered stretches follow at residues glutamate 68–asparagine 97 and methionine 141–serine 164. A compositionally biased stretch (polar residues) spans glutamine 144–arginine 157.

It localises to the mitochondrion. This is an uncharacterized protein from Schizosaccharomyces pombe (strain 972 / ATCC 24843) (Fission yeast).